Here is a 90-residue protein sequence, read N- to C-terminus: UPF0223 protein lwe1035 (90 aa).

This sequence belongs to the UPF0223 family.

This Listeria welshimeri serovar 6b (strain ATCC 35897 / DSM 20650 / CCUG 15529 / CIP 8149 / NCTC 11857 / SLCC 5334 / V8) protein is UPF0223 protein lwe1035.